A 414-amino-acid polypeptide reads, in one-letter code: Glutamyl-tRNA reductase (414 aa).

Residues 49–52 (TCNR), S108, 113–115 (EPQ), and Q119 each bind substrate. The Nucleophile role is filled by C50. Residue 188-193 (GAGQTG) coordinates NADP(+).

Belongs to the glutamyl-tRNA reductase family. As to quaternary structure, homodimer.

It catalyses the reaction (S)-4-amino-5-oxopentanoate + tRNA(Glu) + NADP(+) = L-glutamyl-tRNA(Glu) + NADPH + H(+). It participates in porphyrin-containing compound metabolism; protoporphyrin-IX biosynthesis; 5-aminolevulinate from L-glutamyl-tRNA(Glu): step 1/2. Its function is as follows. Catalyzes the NADPH-dependent reduction of glutamyl-tRNA(Glu) to glutamate 1-semialdehyde (GSA). This is Glutamyl-tRNA reductase from Francisella tularensis subsp. novicida (strain U112).